Consider the following 203-residue polypeptide: uncharacterized protein (203 aa).

Belongs to the DadA oxidoreductase family.

Its function is as follows. Either a functional dehydrogenase or a non-functional fragment. This is an uncharacterized protein from Sinorhizobium fredii (strain NBRC 101917 / NGR234).